The chain runs to 456 residues: Cysteine--tRNA ligase (456 aa).

Cys-28 lines the Zn(2+) pocket. A 'HIGH' region motif is present at residues 30-40 (ITVYDHCHLGH). Residues Cys-209, His-234, and Glu-238 each coordinate Zn(2+). Positions 266-270 (KMAKS) match the 'KMSKS' region motif. Lys-269 serves as a coordination point for ATP.

It belongs to the class-I aminoacyl-tRNA synthetase family. Monomer. Zn(2+) is required as a cofactor.

The protein localises to the cytoplasm. It catalyses the reaction tRNA(Cys) + L-cysteine + ATP = L-cysteinyl-tRNA(Cys) + AMP + diphosphate. This is Cysteine--tRNA ligase from Legionella pneumophila (strain Corby).